The chain runs to 76 residues: MEEIFFGRIGMYEDFQRTRGILQIMARVIVNLLRHAEEIPETTMFISAGEIDLSYPELMRKLTDRIFGANLIRLFK.

This is an uncharacterized protein from Archaeoglobus fulgidus (strain ATCC 49558 / DSM 4304 / JCM 9628 / NBRC 100126 / VC-16).